The following is a 201-amino-acid chain: Recombination protein RecR (201 aa).

The C4-type zinc finger occupies 59-74 (CEICGNMDTENMCRIC). The 96-residue stretch at 82-177 (SIIAIVETVA…KISRLASGIP (96 aa)) folds into the Toprim domain.

It belongs to the RecR family.

In terms of biological role, may play a role in DNA repair. It seems to be involved in an RecBC-independent recombinational process of DNA repair. It may act with RecF and RecO. The sequence is that of Recombination protein RecR from Rickettsia africae (strain ESF-5).